Consider the following 352-residue polypeptide: Pejvakin (352 aa).

The protein belongs to the gasdermin family. In terms of assembly, interacts with MAP1LC3B; interaction is direct. Interacts with IQGAP1. Interacts with ROCK2. Interacts with TRIOBP. As to expression, in ear, it is detected in the organ of Corti and the spiral ganglion within the cochlea in the sensory areas of the vestibule (cristae ampullares of the semicircular ducts, and maculae of the saccule and utricle) and in the first 3 relays (cochlear nuclei, superior olivary complex and inferior colliculus) of the afferent auditory pathway. Detected in hair cells of the cochlea and vestibule but not in neurons. In the afferent auditory pathway, it is present in the cell bodies of neurons but not in fiber bundles such as the trapezoid body in the brainstem. Also detected in spiral ganglion cells, which form the auditory nerve and project to the cochlear nuclei in the brainstem. Also present in the cochlear nuclei, the superior olive and the inferior colliculus (at protein level). Expressed in all the adult organs tested: brain, eye, inner ear, heart, lung, kidney, liver, intestine, testis and weakly in skeletal muscle.

The protein resides in the peroxisome membrane. Its subcellular location is the cell projection. It localises to the cilium. Functionally, peroxisome-associated protein required to protect auditory hair cells against noise-induced damage. Acts by regulating noise-induced peroxisome proliferation in auditory hair cells and neurons, and promoting autophagic degradation of damaged peroxisomes (pexophagy). Noise overexposure increases reactive oxygen species (ROS) levels, causing oxidative damage to auditory hair cells and resulting in hearing loss. PJVK acts as a ROS sensor that recruits the autophagy machinery to trigger pexophagy of peroxisomes damaged by oxidative stress. In addition to pexophagy, also required to promote peroxisome proliferation in response to sound overstimulation. In Mus musculus (Mouse), this protein is Pejvakin.